Consider the following 295-residue polypeptide: Probable porphobilinogen deaminase (295 aa).

At Cys234 the chain carries S-(dipyrrolylmethanemethyl)cysteine.

It belongs to the HMBS family. Dipyrromethane serves as cofactor.

The catalysed reaction is 4 porphobilinogen + H2O = hydroxymethylbilane + 4 NH4(+). Its pathway is porphyrin-containing compound metabolism; protoporphyrin-IX biosynthesis; coproporphyrinogen-III from 5-aminolevulinate: step 2/4. In terms of biological role, tetrapolymerization of the monopyrrole PBG into the hydroxymethylbilane pre-uroporphyrinogen in several discrete steps. The sequence is that of Probable porphobilinogen deaminase (hemC) from Thermoplasma acidophilum (strain ATCC 25905 / DSM 1728 / JCM 9062 / NBRC 15155 / AMRC-C165).